We begin with the raw amino-acid sequence, 884 residues long: Cadherin-1 (884 aa).

Residues 1–23 (MGARCRSFSALLLLLQVSSWLCQ) form the signal peptide. Positions 24 to 156 (ELEPESCSPG…VYPGLRRQKR (133 aa)) are excised as a propeptide. The tract at residues 119–139 (KSMGHHHHRHHHRDPASESNP) is disordered. Residues 121-131 (MGHHHHRHHHR) show a composition bias toward basic residues. Cadherin domains follow at residues 157–264 (DWVI…RPEF), 265–377 (TQEV…APVF), 378–488 (NPST…APIF), 489–595 (MPAE…DNAP), and 596–699 (IPEP…NCMK). The Extracellular segment spans residues 157–709 (DWVIPPISCP…AGIVAAGLQV (553 aa)). Residue D259 coordinates Ca(2+). O-linked (Man...) serine glycosylation is found at S282 and S287. Position 290 (D290) interacts with Ca(2+). T360, T472, T474, and T511 each carry an O-linked (Man...) threonine glycan. N-linked (GlcNAc...) asparagine glycosylation is present at N560. O-linked (Man...) threonine glycosylation is found at T578, T580, and T582. N639 carries an N-linked (GlcNAc...) asparagine glycan. The chain crosses the membrane as a helical span at residues 710 to 733 (PAILGILGGILALLILILLLLLFL). Residues 734–884 (RRRTVVKEPL…ADMYGGGEDD (151 aa)) are Cytoplasmic-facing. Residues 749–808 (DTRDNVYYYDEEGGGEEDQDFDLSQLHRGLDARPEVTRNDVAPTLMSVPQYRPRPANPDE) are disordered. A phosphotyrosine; by SRC mark is found at Y755, Y756, and Y757. Residues 757–769 (YDEEGGGEEDQDF) show a composition bias toward acidic residues. Positions 760–771 (EGGGEEDQDFDL) are required for binding CTNND1 and PSEN1. Phosphoserine is present on S772. Residues 776-786 (RGLDARPEVTR) are compositionally biased toward basic and acidic residues. S795, S840, S842, and S848 each carry phosphoserine. Residues 813-884 (IDENLKAADS…ADMYGGGEDD (72 aa)) are required for binding alpha, beta and gamma catenins.

In terms of assembly, homodimer; disulfide-linked. Component of an E-cadherin/ catenin adhesion complex composed of at least E-cadherin/CDH1, beta-catenin/CTNNB1 or gamma-catenin/JUP, and potentially alpha-catenin/CTNNA1; the complex is located to adherens junctions. Found in a complex composed of CDH1, RAP1A and PKP3; PKP3 acts as a scaffold protein within the complex, the complex is required for CDH1 localization to mature desmosome cell junctions. Interacts with the TRPV4 and CTNNB1 complex. Interacts with CTNND1. The stable association of CTNNA1 is controversial as CTNNA1 was shown not to bind to F-actin when assembled in the complex. Alternatively, the CTNNA1-containing complex may be linked to F-actin by other proteins such as LIMA1. Interaction with PSEN1, cleaves CDH1 resulting in the disassociation of cadherin-based adherens junctions (CAJs). Interacts with AJAP1 and DLGAP5. Interacts with TBC1D2. Interacts with LIMA1. Interacts with CAV1. Interacts with PIP5K1C. Interacts with RAB8B. Interacts with DDR1; this stabilizes CDH1 at the cell surface and inhibits its internalization. Interacts with RAPGEF2. Interacts with KLRG1. Forms a ternary complex composed of ADAM10, CADH1 and EPHA4; within the complex, CADH1 is cleaved by ADAM10 which disrupts adherens junctions. Interacts with SPEF1. Interacts with CTNNB1 and PKP2. Interacts with AMOTL2; the interaction may facilitate binding of radial actin fibers to cell junction complexes. Interacts with DSG3; the interaction is required for CDH1 localization to developing adherens junctions. During apoptosis or with calcium influx, cleaved by a membrane-bound metalloproteinase (ADAM10), PS1/gamma-secretase and caspase-3. Processing by the metalloproteinase, induced by calcium influx, causes disruption of cell-cell adhesion and the subsequent release of beta-catenin into the cytoplasm. The residual membrane-tethered cleavage product is rapidly degraded via an intracellular proteolytic pathway. Cleavage by caspase-3 releases the cytoplasmic tail resulting in disintegration of the actin microfilament system. The gamma-secretase-mediated cleavage promotes disassembly of adherens junctions. During development of the cochlear organ of Corti, cleavage by ADAM10 at adherens junctions promotes pillar cell separation. In terms of processing, O-glycosylated. O-manosylated by TMTC1, TMTC2, TMTC3 or TMTC4. Ser-287 and Thr-511 are O-manosylated by TMTC2 or TMTC4 but not TMTC1 or TMTC3. Post-translationally, N-glycosylation at Asn-639 is essential for expression, folding and trafficking. Addition of bisecting N-acetylglucosamine by MGAT3 modulates its cell membrane location. Ubiquitinated by a SCF complex containing SKP2, which requires prior phosphorylation by CK1/CSNK1A1. Ubiquitinated by CBLL1/HAKAI, requires prior phosphorylation at Tyr-756. In terms of tissue distribution, expressed in inner and outer pillar cells of the organ of Corti (at protein level). Expressed in granuloma macrophages (at protein level). Expressed in the epidermal keratinocytes of the skin from birth (at protein level). Expressed in non-neural epithelial tissues.

It is found in the cell junction. The protein resides in the adherens junction. Its subcellular location is the cell membrane. The protein localises to the endosome. It localises to the golgi apparatus. It is found in the trans-Golgi network. The protein resides in the cytoplasm. Its subcellular location is the desmosome. Its function is as follows. Cadherins are calcium-dependent cell adhesion proteins. They preferentially interact with themselves in a homophilic manner in connecting cells; cadherins may thus contribute to the sorting of heterogeneous cell types. CDH1 is involved in mechanisms regulating cell-cell adhesions, mobility and proliferation of epithelial cells. Promotes organization of radial actin fiber structure and cellular response to contractile forces, via its interaction with AMOTL2 which facilitates anchoring of radial actin fibers to CDH1 junction complexes at the cell membrane. Plays a role in the early stages of desmosome cell-cell junction formation via facilitating the recruitment of DSG2 and DSP to desmosome plaques. Has a potent invasive suppressor role. It is a ligand for integrin alpha-E/beta-7. In terms of biological role, E-Cad/CTF2 promotes non-amyloidogenic degradation of Abeta precursors. Has a strong inhibitory effect on APP C99 and C83 production. (Microbial infection) Does not function as a receptor for L.monocytogenes internalin A (InlA); mutating a single surface-exposed residue confers receptor activity to this protein and promotes uptake of the bacteria. The chain is Cadherin-1 (Cdh1) from Mus musculus (Mouse).